A 212-amino-acid chain; its full sequence is MITLALSKGRIFEETLPLLRAAGIEVLEDPEKSRKLILTTNQPNVRVLVVRASDVPTYVQYGGADLGITGKDTLLEHGSDGLYQPLDLQIAKCRISVAVRADFDYASAVKQGSRLRVATKYVAISREFFAAKGVHVDLIKLYGSMELAPLVGLSDAIVDLVSTGNTLKANHLVEVEHIMDISSRLVVNQAALKLKQAPIRKIIDAFASAISQ.

The protein belongs to the ATP phosphoribosyltransferase family. Short subfamily. As to quaternary structure, heteromultimer composed of HisG and HisZ subunits.

Its subcellular location is the cytoplasm. The catalysed reaction is 1-(5-phospho-beta-D-ribosyl)-ATP + diphosphate = 5-phospho-alpha-D-ribose 1-diphosphate + ATP. The protein operates within amino-acid biosynthesis; L-histidine biosynthesis; L-histidine from 5-phospho-alpha-D-ribose 1-diphosphate: step 1/9. Its function is as follows. Catalyzes the condensation of ATP and 5-phosphoribose 1-diphosphate to form N'-(5'-phosphoribosyl)-ATP (PR-ATP). Has a crucial role in the pathway because the rate of histidine biosynthesis seems to be controlled primarily by regulation of HisG enzymatic activity. This Albidiferax ferrireducens (strain ATCC BAA-621 / DSM 15236 / T118) (Rhodoferax ferrireducens) protein is ATP phosphoribosyltransferase.